We begin with the raw amino-acid sequence, 181 residues long: ATP-dependent protease subunit HslV (181 aa).

The active site involves Thr-6. Na(+)-binding residues include Gly-162, Cys-165, and Thr-168.

This sequence belongs to the peptidase T1B family. HslV subfamily. As to quaternary structure, a double ring-shaped homohexamer of HslV is capped on each side by a ring-shaped HslU homohexamer. The assembly of the HslU/HslV complex is dependent on binding of ATP.

Its subcellular location is the cytoplasm. The enzyme catalyses ATP-dependent cleavage of peptide bonds with broad specificity.. Its activity is regulated as follows. Allosterically activated by HslU binding. In terms of biological role, protease subunit of a proteasome-like degradation complex believed to be a general protein degrading machinery. This is ATP-dependent protease subunit HslV from Nitratidesulfovibrio vulgaris (strain ATCC 29579 / DSM 644 / CCUG 34227 / NCIMB 8303 / VKM B-1760 / Hildenborough) (Desulfovibrio vulgaris).